We begin with the raw amino-acid sequence, 249 residues long: MRPKLRIEDLHFWYGENHALQGISMDVQPNRVTALIGPSGCGKSTLLRCLNRMNELIQGTTLEGTILADGQDIYADDTDPVMVRRRIGMVFQKPNPFPKSIYKNVAWGAEINGYTGDLDALVERSLRQAALWDEVKDQLHSSALDLSGGQQQRLCIARTLAVQPDVVLMDEPASALDPIATSKIEETITELKKDYTIVIVTHNMQQASRISDETAFLYMGRLIEMSPTDQLFTRPEKDRTEAYVTGRFG.

One can recognise an ABC transporter domain in the interval 5–244 (LRIEDLHFWY…PEKDRTEAYV (240 aa)). Residue 37–44 (GPSGCGKS) participates in ATP binding.

The protein belongs to the ABC transporter superfamily. Phosphate importer (TC 3.A.1.7) family. In terms of assembly, the complex is composed of two ATP-binding proteins (PstB), two transmembrane proteins (PstC and PstA) and a solute-binding protein (PstS).

It is found in the cell inner membrane. The enzyme catalyses phosphate(out) + ATP + H2O = ADP + 2 phosphate(in) + H(+). Its function is as follows. Part of the ABC transporter complex PstSACB involved in phosphate import. Responsible for energy coupling to the transport system. This chain is Phosphate import ATP-binding protein PstB, found in Salinibacter ruber (strain DSM 13855 / M31).